A 213-amino-acid chain; its full sequence is UPF0319 protein HAPS_0727 (213 aa).

An N-terminal signal peptide occupies residues 1–21; sequence MKLGKIALAMTALIAGTTAFA.

The protein belongs to the UPF0319 family.

In Glaesserella parasuis serovar 5 (strain SH0165) (Haemophilus parasuis), this protein is UPF0319 protein HAPS_0727.